We begin with the raw amino-acid sequence, 186 residues long: MQLDNQNLIWIDLEMTGLDPENERIIEIATIVTDKDLNILAEGPVLAVHQSDELLAKMSDWCIKTHSANGLVDRVKASKLTERAAELQTIDFLKKWVPKGASPICGNSVAQDKRFLFKYMPELADYFHYRHLDVSTLKELARRWKPELLNGFEKKNTHLALDDIRESIAELAYYRDHFIKLDGDQK.

An Exonuclease domain is found at 8–171; it reads LIWIDLEMTG…DDIRESIAEL (164 aa). Residue Y129 is part of the active site.

The protein belongs to the oligoribonuclease family.

It localises to the cytoplasm. 3'-to-5' exoribonuclease specific for small oligoribonucleotides. The polypeptide is Oligoribonuclease (Mannheimia succiniciproducens (strain KCTC 0769BP / MBEL55E)).